The following is a 149-amino-acid chain: Calmodulin (149 aa).

EF-hand domains are found at residues 8 to 43 (EQIA…LGQN), 44 to 79 (PTEA…KMAD), 81 to 116 (DTEE…LGEK), and 117 to 149 (LSDE…MLSK). Residues D21, D23, D25, N27, E32, D57, D59, N61, T63, E68, D94, D96, N98, and E105 each coordinate Ca(2+). Position 116 is an N6,N6,N6-trimethyllysine (K116). D130, D132, D134, Q136, and E141 together coordinate Ca(2+).

It belongs to the calmodulin family.

Its function is as follows. Calmodulin mediates the control of a large number of enzymes, ion channels and other proteins by Ca(2+). Among the enzymes to be stimulated by the calmodulin-Ca(2+) complex are a number of protein kinases and phosphatases. The protein is Calmodulin of Physarum polycephalum (Slime mold).